Reading from the N-terminus, the 660-residue chain is Acetyl-coenzyme A synthetase (660 aa).

CoA is bound by residues 197–200 and T317; that span reads RGGK. Residues 397–399, 421–426, D512, and R528 each bind ATP; these read GEP and DTWWQT. CoA is bound at residue S536. R539 is a binding site for ATP. Mg(2+) contacts are provided by V550, H552, and V555. At K625 the chain carries N6-acetyllysine.

The protein belongs to the ATP-dependent AMP-binding enzyme family. Mg(2+) serves as cofactor. Post-translationally, acetylated. Deacetylation by the SIR2-homolog deacetylase activates the enzyme.

It carries out the reaction acetate + ATP + CoA = acetyl-CoA + AMP + diphosphate. Functionally, catalyzes the conversion of acetate into acetyl-CoA (AcCoA), an essential intermediate at the junction of anabolic and catabolic pathways. AcsA undergoes a two-step reaction. In the first half reaction, AcsA combines acetate with ATP to form acetyl-adenylate (AcAMP) intermediate. In the second half reaction, it can then transfer the acetyl group from AcAMP to the sulfhydryl group of CoA, forming the product AcCoA. This Burkholderia mallei (strain NCTC 10247) protein is Acetyl-coenzyme A synthetase.